The primary structure comprises 373 residues: SAM domain-containing protein SAMSN-1 (373 aa).

The segment at 1–72 (MLKRKPSNVS…GGGLGKKMRA (72 aa)) is disordered. The Important for interaction with 14-3-3 proteins motif lies at 20 to 25 (RSSSFG). Phosphoserine is present on residues Ser-23 and Ser-34. Positions 37–48 (KPDDSTEAHEGD) are enriched in basic and acidic residues. Over residues 50-61 (TNGSGEQSKTSN) the composition is skewed to polar residues. Ser-74 is modified (phosphoserine). Thr-76 is subject to Phosphothreonine. Residues Ser-90 and Ser-119 each carry the phosphoserine modification. Residues 91–153 (EEKDEEDGEN…DGTSNRDSFR (63 aa)) form a disordered region. A compositionally biased stretch (low complexity) spans 123–146 (SDSMDSLYSGQSSSSGITSCSDGT). Tyr-160 carries the post-translational modification Phosphotyrosine. Residues 163–224 (PFCGRARVHT…KFIYVDVISE (62 aa)) enclose the SH3 domain. The SAM domain occupies 241–305 (KKSKTLQEFL…LSAAENFLEE (65 aa)). Positions 337-359 (DSGCYISSGNSDNGKEDLESENL) are disordered.

As to quaternary structure, interacts with FASLG. Interacts with phosphotyrosine containing proteins. Interacts (via SH3 domain) with CTTN. Interacts (phosphorylated at Ser-23) with YWHAB, YWHAE, YWHAG, YWHAH, YWHAZ and SFN. Interacts directly with SAP30 and HDAC1. Identified in a complex with SAP30 and HDAC1. As to expression, detected in peripheral blood B-cells (at protein level). Detected in spleen, liver and peripheral blood.

It is found in the nucleus. The protein resides in the cytoplasm. The protein localises to the cell projection. It localises to the ruffle. Its function is as follows. Negative regulator of B-cell activation. Down-regulates cell proliferation (in vitro). Promotes RAC1-dependent membrane ruffle formation and reorganization of the actin cytoskeleton. Regulates cell spreading and cell polarization. Stimulates HDAC1 activity. Regulates LYN activity by modulating its tyrosine phosphorylation. This Homo sapiens (Human) protein is SAM domain-containing protein SAMSN-1 (SAMSN1).